The chain runs to 1052 residues: Ubiquitin-like modifier-activating enzyme 6 (1052 aa).

Met1 carries the N-acetylmethionine modification. The segment at Met1–Gly21 is disordered. Arg46 serves as a coordination point for ATP. The residue at position 54 (Thr54) is a Phosphothreonine. Ser301 is subject to Phosphoserine. ATP-binding residues include Ala470 and Asp497. Mg(2+) contacts are provided by Asp499 and Glu502. Asn505, Arg508, Gln509, and Lys521 together coordinate ATP. At Lys544 the chain carries N6-acetyllysine. An ATP-binding site is contributed by Val545. Asp569 contacts Mg(2+). Asn570 is a binding site for ATP. Catalysis depends on Cys625, which acts as the Glycyl thioester intermediate. Lys729 is modified (N6-acetyllysine). A Phosphoserine modification is found at Ser737.

This sequence belongs to the ubiquitin-activating E1 family. As to quaternary structure, forms a thioester with UBD in cells stimulated with tumor necrosis factor-alpha (TNFa) and interferon-gamma (IFNg). As to expression, widely expressed. Isoform 2 is predominantly expressed in testis with higher expression in adult testis than in fetal testis.

It carries out the reaction ATP + ubiquitin + [E1 ubiquitin-activating enzyme]-L-cysteine = AMP + diphosphate + S-ubiquitinyl-[E1 ubiquitin-activating enzyme]-L-cysteine.. It functions in the pathway protein modification; protein ubiquitination. Its function is as follows. Activates ubiquitin by first adenylating its C-terminal glycine residue with ATP, and thereafter linking this residue to the side chain of a cysteine residue in E1, yielding a ubiquitin-E1 thioester and free AMP. Specific for ubiquitin, does not activate ubiquitin-like peptides. Also activates UBD/FAT10 conjugation via adenylation of its C-terminal glycine. Differs from UBE1 in its specificity for substrate E2 charging. Does not charge cell cycle E2s, such as CDC34. Essential for embryonic development. Isoform 2 may play a key role in ubiquitin system and may influence spermatogenesis and male fertility. This chain is Ubiquitin-like modifier-activating enzyme 6 (UBA6), found in Homo sapiens (Human).